The sequence spans 163 residues: ATP synthase subunit b 1 (163 aa).

The helical transmembrane segment at 7 to 27 (AETWVAIAFVILLGVFAYLGV) threads the bilayer.

The protein belongs to the ATPase B chain family. As to quaternary structure, F-type ATPases have 2 components, F(1) - the catalytic core - and F(0) - the membrane proton channel. F(1) has five subunits: alpha(3), beta(3), gamma(1), delta(1), epsilon(1). F(0) has three main subunits: a(1), b(2) and c(10-14). The alpha and beta chains form an alternating ring which encloses part of the gamma chain. F(1) is attached to F(0) by a central stalk formed by the gamma and epsilon chains, while a peripheral stalk is formed by the delta and b chains.

It localises to the cell inner membrane. Its function is as follows. F(1)F(0) ATP synthase produces ATP from ADP in the presence of a proton or sodium gradient. F-type ATPases consist of two structural domains, F(1) containing the extramembraneous catalytic core and F(0) containing the membrane proton channel, linked together by a central stalk and a peripheral stalk. During catalysis, ATP synthesis in the catalytic domain of F(1) is coupled via a rotary mechanism of the central stalk subunits to proton translocation. Functionally, component of the F(0) channel, it forms part of the peripheral stalk, linking F(1) to F(0). The sequence is that of ATP synthase subunit b 1 from Rhodopseudomonas palustris (strain ATCC BAA-98 / CGA009).